Consider the following 526-residue polypeptide: Adenylyl cyclase-associated protein (526 aa).

Residues 1–168 (MPDSKYTMQG…RQSKYFAYLS (168 aa)) are adenyl cyclase-binding. 3 disordered regions span residues 43-72 (EASK…PEVE), 255-304 (QSTK…DANK), and 326-371 (KVDK…RPPR). Residues 45–64 (SKNNKPSDSGADANTTNEPS) are compositionally biased toward polar residues. An SH3-binding motif is present at residues 169 to 369 (ALSEGAPLFS…KPSTLKTKRP (201 aa)). Over residues 262-274 (ATSSPSPASATAA) the composition is skewed to low complexity. Residues 275–285 (PAPPPPPPAPP) show a composition bias toward pro residues. The segment covering 290–302 (EISNDTPATSSDA) has biased composition (polar residues). Over residues 326 to 338 (KVDKSQQTHKNPE) the composition is skewed to basic and acidic residues. Positions 342–352 (SSTVSSTGSKS) are enriched in low complexity. An interaction with SH3 domain of ABP1 region spans residues 354-361 (PPPRPKKP). Basic residues predominate over residues 357-370 (RPKKPSTLKTKRPP). A C-CAP/cofactor C-like domain is found at 369–504 (PPRKELVGNK…EDDDYVEFPI (136 aa)). A dimerization and actin-binding region spans residues 370-526 (PRKELVGNKW…FKSAVFEHAG (157 aa)). A Phosphoserine modification is found at serine 454.

This sequence belongs to the CAP family. As to quaternary structure, homodimer.

Its subcellular location is the cytoplasm. The protein resides in the cytoskeleton. It is found in the actin patch. Its function is as follows. The N-terminal domain binds to adenylyl cyclase, thereby enabling adenylyl cyclase to be activated by upstream regulatory signals, such as Ras. The C-terminal domain is required for normal cellular morphology and growth control. In Saccharomyces cerevisiae (strain ATCC 204508 / S288c) (Baker's yeast), this protein is Adenylyl cyclase-associated protein (SRV2).